A 184-amino-acid chain; its full sequence is Ribosome-recycling factor (184 aa).

This sequence belongs to the RRF family.

The protein resides in the cytoplasm. In terms of biological role, responsible for the release of ribosomes from messenger RNA at the termination of protein biosynthesis. May increase the efficiency of translation by recycling ribosomes from one round of translation to another. The sequence is that of Ribosome-recycling factor from Clostridium botulinum (strain Langeland / NCTC 10281 / Type F).